The sequence spans 256 residues: Hemin import ATP-binding protein HmuV (256 aa).

Positions 2-238 (ISAQNLVYSL…QALTMLYGAD (237 aa)) constitute an ABC transporter domain. Position 34–41 (34–41 (GPNGAGKS)) interacts with ATP.

It belongs to the ABC transporter superfamily. Heme (hemin) importer (TC 3.A.1.14.5) family. As to quaternary structure, the complex is composed of two ATP-binding proteins (HmuV), two transmembrane proteins (HmuU) and a solute-binding protein (HmuT).

Its subcellular location is the cell inner membrane. Functionally, part of the ABC transporter complex HmuTUV involved in hemin import. Responsible for energy coupling to the transport system. The polypeptide is Hemin import ATP-binding protein HmuV (Escherichia coli O6:K15:H31 (strain 536 / UPEC)).